A 192-amino-acid polypeptide reads, in one-letter code: Protein GrpE (192 aa).

The tract at residues 1 to 34 is disordered; it reads MSSKEQKTPNEQVSEEMENTAEQQVEATQETGEC. Residues 20 to 31 are compositionally biased toward polar residues; it reads TAEQQVEATQET.

This sequence belongs to the GrpE family. In terms of assembly, homodimer.

The protein localises to the cytoplasm. Functionally, participates actively in the response to hyperosmotic and heat shock by preventing the aggregation of stress-denatured proteins, in association with DnaK and GrpE. It is the nucleotide exchange factor for DnaK and may function as a thermosensor. Unfolded proteins bind initially to DnaJ; upon interaction with the DnaJ-bound protein, DnaK hydrolyzes its bound ATP, resulting in the formation of a stable complex. GrpE releases ADP from DnaK; ATP binding to DnaK triggers the release of the substrate protein, thus completing the reaction cycle. Several rounds of ATP-dependent interactions between DnaJ, DnaK and GrpE are required for fully efficient folding. This chain is Protein GrpE, found in Yersinia pseudotuberculosis serotype I (strain IP32953).